A 402-amino-acid chain; its full sequence is Multidrug resistance protein MdtH (402 aa).

11 consecutive transmembrane segments (helical) span residues 13 to 33 (YFLL…FPLI), 34 to 54 (SIRF…ALGL), 99 to 116 (PWVL…GTLF), 139 to 159 (ILMM…SWLL), 165 to 185 (LVCS…AWYL), 214 to 234 (VLTL…LPIM), 243 to 263 (AAVK…LYPI), 277 to 297 (LMAG…TSSL), 300 to 320 (LFTL…ARET), 340 to 360 (LGLA…FDAG), and 369 to 389 (PWLM…WQFS).

This sequence belongs to the major facilitator superfamily. DHA1 family. MdtH (TC 2.A.1.2.21) subfamily.

The protein localises to the cell inner membrane. This chain is Multidrug resistance protein MdtH, found in Klebsiella pneumoniae subsp. pneumoniae (strain ATCC 700721 / MGH 78578).